A 1396-amino-acid chain; its full sequence is Helicase ARIP4 (1396 aa).

The disordered stretch occupies residues 1 to 103 (MSDASISGSE…LQKPANLRRN (103 aa)). The segment covering 11–49 (PELDPEDMEEEEEDDEDDDEEEEEEEDEEDNDGDDEDDK) has biased composition (acidic residues). A compositionally biased stretch (polar residues) spans 75 to 84 (RSTTSGQSGQ). Residues 290–510 (RFSGSSGFGC…WCMVDFVRPD (221 aa)) form the Helicase ATP-binding domain. 303 to 310 (HSMGLGKT) contacts ATP. A DEAH box motif is present at residues 461–464 (DEGH). The LXXLL motif 1 signature appears at 549–553 (LHSLL). The Helicase C-terminal domain occupies 717-891 (KMVLLFHLIE…RVVDDLNPEV (175 aa)). 2 disordered regions span residues 1117–1168 (SGKQ…PDSP) and 1194–1250 (NLGL…STMN). Composition is skewed to polar residues over residues 1128–1148 (QATSGAQGSSAPYLSNGRHST) and 1218–1238 (DQSSHWPSNKRNPYSQLSYPN). Positions 1273–1277 (LPSLL) match the LXXLL motif 2 motif. Residues 1340–1396 (GLPTNNPASTFPGYLSSHSNYQASPGTSSRPLPSGETELGSCEEDGRDDDVVEVTGE) are disordered. The segment covering 1355–1370 (SSHSNYQASPGTSSRP) has biased composition (polar residues). Residues 1380 to 1396 (SCEEDGRDDDVVEVTGE) show a composition bias toward acidic residues.

This sequence belongs to the SNF2/RAD54 helicase family.

It is found in the nucleus. It catalyses the reaction ATP + H2O = ADP + phosphate + H(+). Its function is as follows. DNA helicase that modulates androgen receptor (AR)-dependent transactivation in a promoter-dependent manner. The protein is Helicase ARIP4 (rad54l2) of Xenopus tropicalis (Western clawed frog).